The primary structure comprises 441 residues: Ribulose bisphosphate carboxylase large chain (441 aa).

Lysine 4 is subject to N6,N6,N6-trimethyllysine. The substrate site is built by asparagine 113 and threonine 163. Lysine 165 (proton acceptor) is an active-site residue. Lysine 167 serves as a coordination point for substrate. Mg(2+)-binding residues include lysine 191, aspartate 193, and glutamate 194. Lysine 191 carries the post-translational modification N6-carboxylysine. Histidine 284 (proton acceptor) is an active-site residue. 3 residues coordinate substrate: arginine 285, histidine 317, and serine 369.

Belongs to the RuBisCO large chain family. Type I subfamily. Heterohexadecamer of 8 large chains and 8 small chains; disulfide-linked. The disulfide link is formed within the large subunit homodimers. Mg(2+) is required as a cofactor. Post-translationally, the disulfide bond which can form in the large chain dimeric partners within the hexadecamer appears to be associated with oxidative stress and protein turnover.

It is found in the plastid. Its subcellular location is the chloroplast. It catalyses the reaction 2 (2R)-3-phosphoglycerate + 2 H(+) = D-ribulose 1,5-bisphosphate + CO2 + H2O. It carries out the reaction D-ribulose 1,5-bisphosphate + O2 = 2-phosphoglycolate + (2R)-3-phosphoglycerate + 2 H(+). Functionally, ruBisCO catalyzes two reactions: the carboxylation of D-ribulose 1,5-bisphosphate, the primary event in carbon dioxide fixation, as well as the oxidative fragmentation of the pentose substrate in the photorespiration process. Both reactions occur simultaneously and in competition at the same active site. The sequence is that of Ribulose bisphosphate carboxylase large chain from Heliamphora nutans (Venezuelan marsh pitcher plant).